The primary structure comprises 479 residues: Transmembrane protein 161A (479 aa).

The N-terminal stretch at 1–28 is a signal peptide; it reads MAVLGVQLVVTLLTATLMHRLAPHCSFA. At 29 to 98 the chain is on the extracellular side; sequence RWLLCNGSLF…LTTVDALVLR (70 aa). An N-linked (GlcNAc...) asparagine glycan is attached at N34. At S69 the chain carries Phosphoserine. Residues 99–119 traverse the membrane as a helical segment; that stretch reads FFLEYQWFVDFAVYSGGVYLF. The Cytoplasmic portion of the chain corresponds to 120–134; sequence TEAYYYMLGPAKETN. A helical membrane pass occupies residues 135–155; it reads IAVFWCLLTVTFSIKMFLTVT. Over 156–166 the chain is Extracellular; sequence RLYFSAEEGGE. A helical transmembrane segment spans residues 167–187; the sequence is RSVCLTFAFLFLLLAMLVQVV. Residues 188 to 224 lie on the Cytoplasmic side of the membrane; it reads REETLELGLEPGLASMTQNLEPLLKKQGWDWALPVAK. The chain crosses the membrane as a helical span at residues 225 to 245; it reads LAIRVGLAVVGSVLGAFLTFP. The Extracellular portion of the chain corresponds to 246-263; the sequence is GLRLAQTHRDALTMSEDR. The helical transmembrane segment at 264–284 threads the bilayer; it reads PMLQFLLHTSFLSPLFILWLW. Topologically, residues 285-304 are cytoplasmic; it reads TKPIARDFLHQPPFGETRFS. Residues 305–325 form a helical membrane-spanning segment; the sequence is LLSDSAFDSGRLWLLVVLCLL. Residues 326 to 370 are Extracellular-facing; it reads RLAVTRPHLQAYLCLAKARVEQLRREAGRIEAREIQQRVVRVYCY. A helical transmembrane segment spans residues 371–391; it reads VTVVSLQYLTPLILTLNCTLL. Residues 392–449 are Cytoplasmic-facing; sequence LKTLGGYSWGLGPAPLLSPDPSSASAAPIGSGEDEVQQTAARIAGALGGLLTPLFLRG. Residues 450–470 form a helical membrane-spanning segment; that stretch reads VLAYLIWWTAACQLLASLFGL. At 471–479 the chain is on the extracellular side; that stretch reads YFHQHLAGS.

The protein belongs to the TMEM161 family.

The protein resides in the membrane. May play a role in protection against oxidative stress. Overexpression leads to reduced levels of oxidant-induced DNA damage and apoptosis. In Homo sapiens (Human), this protein is Transmembrane protein 161A (TMEM161A).